Consider the following 793-residue polypeptide: Spindle and centriole-associated protein 1 (793 aa).

Residues Met-1–Arg-29 form a disordered region. The segment covering Lys-18–Gln-27 has biased composition (basic residues). The stretch at Ser-312–Glu-405 forms a coiled coil. Positions Lys-519–Pro-542 are disordered. Positions Leu-622–Gln-712 form a coiled coil. Positions Pro-718 to Leu-739 are enriched in polar residues. Residues Pro-718 to Glu-783 form a disordered region. Residues Ser-740–Ser-753 are compositionally biased toward low complexity. Polar residues predominate over residues Asn-754 to Ala-778.

Its subcellular location is the cytoplasm. The protein localises to the cytoskeleton. The protein resides in the microtubule organizing center. It is found in the centrosome. It localises to the centriole. Its subcellular location is the spindle. In terms of biological role, regulator required for centriole duplication. This chain is Spindle and centriole-associated protein 1 (spice1), found in Xenopus laevis (African clawed frog).